A 789-amino-acid chain; its full sequence is Spermatogenesis-associated protein 20 (789 aa).

Residues 1 to 19 (MSHHSPPPPKHKGEHKGHG) are compositionally biased toward basic residues. Residues 1–65 (MSHHSPPPPK…CPPPAPQKTA (65 aa)) form a disordered region. Phosphoserine occurs at positions 5 and 652.

As to expression, testis-specific and age-dependent (at protein level). Highly expressed. Expressed in round spermatids located in the inner half-layer of the seminiferous epithelium as well as in early elongated spermatids having cytoplasmic protrusions into the tubular lumen.

It localises to the secreted. Its function is as follows. May play a role in fertility regulation. The polypeptide is Spermatogenesis-associated protein 20 (Spata20) (Rattus norvegicus (Rat)).